Consider the following 97-residue polypeptide: YcgL domain-containing protein PP_4590 (97 aa).

The 85-residue stretch at 3–87 (RICSIYKSPR…LEDEYIEHLP (85 aa)) folds into the YcgL domain.

This Pseudomonas putida (strain ATCC 47054 / DSM 6125 / CFBP 8728 / NCIMB 11950 / KT2440) protein is YcgL domain-containing protein PP_4590.